The chain runs to 389 residues: Chalcone synthase 5 (389 aa).

Cys-164 is an active-site residue.

Belongs to the thiolase-like superfamily. Chalcone/stilbene synthases family.

It catalyses the reaction (E)-4-coumaroyl-CoA + 3 malonyl-CoA + 3 H(+) = 2',4,4',6'-tetrahydroxychalcone + 3 CO2 + 4 CoA. It participates in secondary metabolite biosynthesis; flavonoid biosynthesis. In terms of biological role, the primary product of this enzyme is 4,2',4',6'-tetrahydroxychalcone (also termed naringenin-chalcone or chalcone) which can under specific conditions spontaneously isomerize into naringenin. The polypeptide is Chalcone synthase 5 (CHS5) (Trifolium subterraneum (Subterranean clover)).